We begin with the raw amino-acid sequence, 226 residues long: ATP-dependent dethiobiotin synthetase BioD (226 aa).

Residue 12-17 coordinates ATP; sequence DAGKTV. T16 contacts Mg(2+). K39 is a catalytic residue. S43 contacts substrate. ATP-binding positions include D47, 108-111, 168-169, 200-202, and N207; these read EGVG, NC, and PYL. Residues D47 and E108 each contribute to the Mg(2+) site.

Belongs to the dethiobiotin synthetase family. As to quaternary structure, homodimer. Mg(2+) is required as a cofactor.

The protein resides in the cytoplasm. It carries out the reaction (7R,8S)-7,8-diammoniononanoate + CO2 + ATP = (4R,5S)-dethiobiotin + ADP + phosphate + 3 H(+). It catalyses the reaction (7R,8S)-8-amino-7-(carboxyamino)nonanoate + ATP = (4R,5S)-dethiobiotin + ADP + phosphate + H(+). It functions in the pathway cofactor biosynthesis; biotin biosynthesis; biotin from 7,8-diaminononanoate: step 1/2. Functionally, catalyzes a mechanistically unusual reaction, the ATP-dependent insertion of CO2 between the N7 and N8 nitrogen atoms of 7,8-diaminopelargonic acid (DAPA, also called 7,8-diammoniononanoate) to form a ureido ring. This cyanobacterium does not encode bioA (which catalyzes the formation of the precursor for this reaction in the cannonical pathway), instead it encodes bioU, which replaces bioA and also performs the first half of the cannonical BioD reaction. Thus in this organism BioD has a different substrate. The polypeptide is ATP-dependent dethiobiotin synthetase BioD (Cyanothece sp. (strain PCC 7425 / ATCC 29141)).